The primary structure comprises 315 residues: DNA-directed RNA polymerase subunit alpha (315 aa).

An alpha N-terminal domain (alpha-NTD) region spans residues 1–228; it reads MLEIEKPVIQ…EHFKLFMTLT (228 aa). An alpha C-terminal domain (alpha-CTD) region spans residues 245–315; sequence KEKALEMTIE…LGLNLRLNDE (71 aa).

The protein belongs to the RNA polymerase alpha chain family. As to quaternary structure, homodimer. The RNAP catalytic core consists of 2 alpha, 1 beta, 1 beta' and 1 omega subunit. When a sigma factor is associated with the core the holoenzyme is formed, which can initiate transcription.

The enzyme catalyses RNA(n) + a ribonucleoside 5'-triphosphate = RNA(n+1) + diphosphate. DNA-dependent RNA polymerase catalyzes the transcription of DNA into RNA using the four ribonucleoside triphosphates as substrates. This is DNA-directed RNA polymerase subunit alpha from Clostridium perfringens (strain ATCC 13124 / DSM 756 / JCM 1290 / NCIMB 6125 / NCTC 8237 / Type A).